Reading from the N-terminus, the 118-residue chain is Large ribosomal subunit protein bL21c (118 aa).

Belongs to the bacterial ribosomal protein bL21 family. In terms of assembly, part of the 50S ribosomal subunit.

The protein localises to the plastid. Its subcellular location is the chloroplast. Its function is as follows. This protein binds to 23S rRNA. In Psilotum nudum (Whisk fern), this protein is Large ribosomal subunit protein bL21c.